The sequence spans 242 residues: Ubiquitin-conjugating enzyme E2 6 (242 aa).

Topologically, residues 1-220 (MASRQSQKRL…HSTPSFGVQR (220 aa)) are cytoplasmic. One can recognise a UBC core domain in the interval 5–156 (QSQKRLTKEY…NQRFTKQFPD (152 aa)). C87 (glycyl thioester intermediate) is an active-site residue. The tract at residues 170-190 (AREQAAATTDSTDPEKPFDVR) is disordered. Residues 221 to 240 (FTLVGVVVAAFIAAYFNFFS) traverse the membrane as a helical segment.

Belongs to the ubiquitin-conjugating enzyme family.

Its subcellular location is the endoplasmic reticulum membrane. It catalyses the reaction S-ubiquitinyl-[E1 ubiquitin-activating enzyme]-L-cysteine + [E2 ubiquitin-conjugating enzyme]-L-cysteine = [E1 ubiquitin-activating enzyme]-L-cysteine + S-ubiquitinyl-[E2 ubiquitin-conjugating enzyme]-L-cysteine.. It participates in protein modification; protein ubiquitination. Functionally, catalyzes the covalent attachment of ubiquitin to other proteins. Functions in degradation of misfolded or regulated proteins localized in the endoplasmic reticulum (ER) lumen or membrane via the ubiquitin-proteasome system. Cognate E2 conjugating enzyme for the DOA10 ubiquitin ligase complex, which is part of the ERAD-C pathway responsible for the rapid degradation of membrane proteins with misfolded cytoplasmic domains. In Debaryomyces hansenii (strain ATCC 36239 / CBS 767 / BCRC 21394 / JCM 1990 / NBRC 0083 / IGC 2968) (Yeast), this protein is Ubiquitin-conjugating enzyme E2 6 (UBC6).